The sequence spans 702 residues: Phosphoglycerol transferase I (702 aa).

The next 3 membrane-spanning stretches (helical) occupy residues 2 to 22 (HWILALSLLLLLWLLVASPRL), 71 to 91 (FSGYIAVFIGMVLLSLSPLML), and 103 to 123 (GGAVFGAFVVMLLVSMAVSPV).

It belongs to the OpgB family.

Its subcellular location is the cell inner membrane. It carries out the reaction a phosphatidylglycerol + a membrane-derived-oligosaccharide D-glucose = a 1,2-diacyl-sn-glycerol + a membrane-derived-oligosaccharide 6-(glycerophospho)-D-glucose.. The protein operates within glycan metabolism; osmoregulated periplasmic glucan (OPG) biosynthesis. In terms of biological role, transfers a phosphoglycerol residue from phosphatidylglycerol to the membrane-bound nascent glucan backbones. The protein is Phosphoglycerol transferase I of Xanthomonas campestris pv. campestris (strain B100).